A 680-amino-acid polypeptide reads, in one-letter code: Pilus tip adhesin Cpa (680 aa).

Residues 62–211 (CFNLTKHFPS…IFQSSDKTFQ (150 aa)) constitute a cross-link (isoglutamyl cysteine thioester (Cys-Gln)). Residues 217–236 (EYVPDTPPKPGEEPPAKTEK) are disordered. Over residues 226–236 (PGEEPPAKTEK) the composition is skewed to basic and acidic residues. Residues 243–546 (KYAEGDYSKL…ELIDVISMED (304 aa)) constitute a cross-link (isoaspartyl lysine isopeptide (Lys-Asp)). The region spanning 253–311 (LEGATLKLAQIEGSGFQEKIFDSNKSGEKVELPNGTYVLSELKPPQGYGVATPITFKVA) is the CNA-B domain. Positions 374–526 (CFNADLHSPP…FFVPNSSRYQ (153 aa)) form a cross-link, isoglutamyl cysteine thioester (Cys-Gln). The segment at residues 562-667 (KTVTGTIADK…KEDETVAFEN (106 aa)) is a cross-link (isoaspartyl lysine isopeptide (Lys-Asn)). Residues 672–676 (VPPTG) carry the VPPTG sorting signal motif. Residue T675 forms a Threonyl lysine isopeptide (Thr-Lys) (interchain with K-? in major pilin subunit) linkage. A propeptide spans 676–680 (GLTTD) (removed by sortase).

Monomer. In terms of processing, proteolytically processed and assembled in pili through a transpeptidation reaction catalyzed by a sortase, which leads to a covalent link between Cpa and a major pilin subunit.

It is found in the fimbrium. Its function is as follows. Component of the pilus tip. Can bind covalently, via its two reactive thioester bonds, to molecular targets from host cell surface and can thus mediate adhesion of the streptococcal pili to host cells. Lysine side chains or a carbohydrate with a free amine group might be candidates for Cpa binding. In vitro, can covalently bind to spermidine, but it is unlikely that spermidine is the natural target of Cpa. In Streptococcus pyogenes, this protein is Pilus tip adhesin Cpa (cpa).